The sequence spans 289 residues: MDRLSSHNATKEVVQKYNFKFSKSLGQNFLIDSNIIDKILSGARITRGDNIIEVGPGIGTLTREMGKIAEKVVAIEIDRNLIPILKDTLSDLDNTEVVNQDILKVDIQELVKDKLNGGPVKLVANLPYYITTPIVMKFLEEDIPVTDIVVMVQKEVADRMNAIPGTKDYGALSIAVQYYCDTEIVAKAPRHMFIPQPNVDSTVIGLHVRDKRKYDVHNEDIFFKTVKASFGQRRKTLLNSLGGLGFLNKDEIREILKEANIDEKRRGETLSIEEFSVLSNIINTKVSSK.

Asparagine 28, leucine 30, glycine 55, glutamate 76, aspartate 101, and asparagine 125 together coordinate S-adenosyl-L-methionine.

This sequence belongs to the class I-like SAM-binding methyltransferase superfamily. rRNA adenine N(6)-methyltransferase family. RsmA subfamily.

It localises to the cytoplasm. It carries out the reaction adenosine(1518)/adenosine(1519) in 16S rRNA + 4 S-adenosyl-L-methionine = N(6)-dimethyladenosine(1518)/N(6)-dimethyladenosine(1519) in 16S rRNA + 4 S-adenosyl-L-homocysteine + 4 H(+). Specifically dimethylates two adjacent adenosines (A1518 and A1519) in the loop of a conserved hairpin near the 3'-end of 16S rRNA in the 30S particle. May play a critical role in biogenesis of 30S subunits. The sequence is that of Ribosomal RNA small subunit methyltransferase A from Clostridioides difficile (strain 630) (Peptoclostridium difficile).